The chain runs to 517 residues: Glucose-6-phosphate isomerase (517 aa).

Catalysis depends on Glu345, which acts as the Proton donor. Active-site residues include His376 and Lys490.

This sequence belongs to the GPI family.

The protein resides in the cytoplasm. It catalyses the reaction alpha-D-glucose 6-phosphate = beta-D-fructose 6-phosphate. The protein operates within carbohydrate biosynthesis; gluconeogenesis. It functions in the pathway carbohydrate degradation; glycolysis; D-glyceraldehyde 3-phosphate and glycerone phosphate from D-glucose: step 2/4. Functionally, catalyzes the reversible isomerization of glucose-6-phosphate to fructose-6-phosphate. This is Glucose-6-phosphate isomerase from Erythrobacter litoralis (strain HTCC2594).